Reading from the N-terminus, the 490-residue chain is Mitochondria-eating protein (490 aa).

The stretch at 112 to 210 (IRELSSVHES…RILRDEVSFL (99 aa)) forms a coiled coil. 2 stretches are compositionally biased toward low complexity: residues 224 to 241 (SRSP…SPVR) and 456 to 490 (RSSS…SSRL). 2 disordered regions span residues 224 to 253 (SRSP…LTSS) and 455 to 490 (SRSS…SSRL).

It belongs to the MIEAP family.

It localises to the cytoplasm. Its subcellular location is the mitochondrion outer membrane. The protein resides in the mitochondrion matrix. Its function is as follows. Key regulator of mitochondrial quality that mediates the repairing or degradation of unhealthy mitochondria in response to mitochondrial damage. Mediator of mitochondrial protein catabolic process (also named MALM) by mediating the degradation of damaged proteins inside mitochondria by promoting the accumulation in the mitochondrial matrix of hydrolases that are characteristic of the lysosomal lumen. Also involved in mitochondrion degradation of damaged mitochondria by promoting the formation of vacuole-like structures (named MIV), which engulf and degrade unhealthy mitochondria by accumulating lysosomes. Binds cardiolipin. May form molecular condensates (non-membrane-bounded organelles) within mitochondria that compartmentalize and promote cardiolipin metabolism. This Danio rerio (Zebrafish) protein is Mitochondria-eating protein (spata18).